Reading from the N-terminus, the 180-residue chain is Hypoxanthine-guanine phosphoribosyltransferase (180 aa).

Residues Lys-43 and Gly-44 each coordinate diphosphate. Mg(2+)-binding residues include Glu-99 and Asp-100. Asp-103 functions as the Proton acceptor in the catalytic mechanism. Residues Lys-131, 152 to 153 (FI), and Asp-159 contribute to the GMP site. Arg-165 contacts diphosphate.

It belongs to the purine/pyrimidine phosphoribosyltransferase family. Mg(2+) serves as cofactor.

It localises to the cytoplasm. It catalyses the reaction IMP + diphosphate = hypoxanthine + 5-phospho-alpha-D-ribose 1-diphosphate. The enzyme catalyses GMP + diphosphate = guanine + 5-phospho-alpha-D-ribose 1-diphosphate. It functions in the pathway purine metabolism; IMP biosynthesis via salvage pathway; IMP from hypoxanthine: step 1/1. It participates in purine metabolism; GMP biosynthesis via salvage pathway; GMP from guanine: step 1/1. In terms of biological role, purine salvage pathway enzyme that catalyzes the transfer of the ribosyl-5-phosphate group from 5-phospho-alpha-D-ribose 1-diphosphate (PRPP) to the N9 position of the 6-oxopurines hypoxanthine and guanine to form the corresponding ribonucleotides IMP (inosine 5'-monophosphate) and GMP (guanosine 5'-monophosphate), with the release of PPi. The polypeptide is Hypoxanthine-guanine phosphoribosyltransferase (hpt) (Streptococcus thermophilus (strain CNRZ 1066)).